The following is a 796-amino-acid chain: Conidiophore development regulator abaA (796 aa).

Positions Gly-133–Asp-207 form a DNA-binding region, TEA. Residues Arg-215–Glu-254 are disordered. The segment covering His-243–Tyr-252 has biased composition (polar residues). Residues Leu-341–Met-362 are leucine-zipper-like. The interval Glu-612–Val-643 is disordered. The segment covering Asn-629–Val-643 has biased composition (polar residues).

Belongs to the TEC1 family.

Its subcellular location is the nucleus. Its function is as follows. BrlA, abaA and wetA are pivotal regulators of conidiophore development and conidium maturation. They act individually and together to regulate their own expression and that of numerous other sporulation-specific gene. Controls temporal and spatial specificity in Aspergillus development. Directs the differentiation of phialides and is continuously required for maintenance of their function. Expression of abaA leads to activation of brlA and wetA, cessation of vegetative growth, and accentuated cellular vacuolization. Binds to the sequence 5'-CATTCY-3', where Y is a pyrimidine, making both major- and minor-groove contacts. Multiple abaA binding sites are present in the cis-acting regulatory regions of several developmentally controlled structural genes as well as those of the upstream regulatory gene brlA, the downstream regulatory gene wetA, and abaA itself. In Emericella nidulans (strain FGSC A4 / ATCC 38163 / CBS 112.46 / NRRL 194 / M139) (Aspergillus nidulans), this protein is Conidiophore development regulator abaA.